The sequence spans 478 residues: Glutamate-1-semialdehyde 2,1-aminomutase, chloroplastic (478 aa).

Residues 1–40 constitute a chloroplast transit peptide; sequence MAGAAAASAAAAAVASGISARPVAPRPSPSRARAPRSVVR. The segment at 15-36 is disordered; it reads ASGISARPVAPRPSPSRARAPR. N6-(pyridoxal phosphate)lysine is present on lysine 318.

It belongs to the class-III pyridoxal-phosphate-dependent aminotransferase family. HemL subfamily. In terms of assembly, homodimer. The cofactor is pyridoxal 5'-phosphate.

It localises to the plastid. Its subcellular location is the chloroplast. It catalyses the reaction (S)-4-amino-5-oxopentanoate = 5-aminolevulinate. It participates in porphyrin-containing compound metabolism; protoporphyrin-IX biosynthesis; 5-aminolevulinate from L-glutamyl-tRNA(Glu): step 2/2. It functions in the pathway porphyrin-containing compound metabolism; chlorophyll biosynthesis. This is Glutamate-1-semialdehyde 2,1-aminomutase, chloroplastic (GSA) from Oryza sativa subsp. japonica (Rice).